Here is a 162-residue protein sequence, read N- to C-terminus: Phospholipase A and acyltransferase 3 (162 aa).

At 1–133 (MRAPIPEPKP…VARSDQVRDV (133 aa)) the chain is on the cytoplasmic side. The 117-residue stretch at 13 to 129 (LIEIFRPFYR…LRYGVARSDQ (117 aa)) folds into the LRAT domain. Active-site residues include histidine 23 and histidine 35. The active-site Acyl-thioester intermediate is the cysteine 113. A helical transmembrane segment spans residues 134 to 154 (IIAASAAGMGLAAMSLIGVMF). The Lumenal portion of the chain corresponds to 155 to 162 (SRNKRQKQ).

This sequence belongs to the H-rev107 family. Interacts with PPP2R1A; this interaction might decrease PP2A activity.

It localises to the cell membrane. It is found in the cytoplasm. Its subcellular location is the cytosol. The protein resides in the perinuclear region. The protein localises to the peroxisome membrane. It localises to the mitochondrion membrane. It is found in the nucleus envelope. Its subcellular location is the lysosome membrane. The protein resides in the endoplasmic reticulum membrane. The catalysed reaction is a 1,2-diacyl-sn-glycero-3-phosphocholine + H2O = a 1-acyl-sn-glycero-3-phosphocholine + a fatty acid + H(+). The enzyme catalyses a 1,2-diacyl-sn-glycero-3-phosphocholine + H2O = a 2-acyl-sn-glycero-3-phosphocholine + a fatty acid + H(+). It catalyses the reaction 1,2-dihexadecanoyl-sn-glycero-3-phosphocholine + H2O = 1-hexadecanoyl-sn-glycero-3-phosphocholine + hexadecanoate + H(+). It carries out the reaction 1,2-dihexadecanoyl-sn-glycero-3-phosphocholine + H2O = 2-hexadecanoyl-sn-glycero-3-phosphocholine + hexadecanoate + H(+). The catalysed reaction is 1-hexadecanoyl-2-(9Z-octadecenoyl)-sn-glycero-3-phosphocholine + H2O = 2-(9Z-octadecenoyl)-sn-glycero-3-phosphocholine + hexadecanoate + H(+). The enzyme catalyses 1-hexadecanoyl-2-(9Z-octadecenoyl)-sn-glycero-3-phosphocholine + H2O = 1-hexadecanoyl-sn-glycero-3-phosphocholine + (9Z)-octadecenoate + H(+). It catalyses the reaction 1-hexadecanoyl-2-(5Z,8Z,11Z,14Z-eicosatetraenoyl)-sn-glycero-3-phosphocholine + H2O = 1-hexadecanoyl-sn-glycero-3-phosphocholine + (5Z,8Z,11Z,14Z)-eicosatetraenoate + H(+). It carries out the reaction 1-hexadecanoyl-2-(5Z,8Z,11Z,14Z-eicosatetraenoyl)-sn-glycero-3-phosphocholine + H2O = 2-(5Z,8Z,11Z,14Z)-eicosatetraenoyl-sn-glycero-3-phosphocholine + hexadecanoate + H(+). The catalysed reaction is 1-hexadecanoyl-2-(9Z,12Z-octadecadienoyl)-sn-glycero-3-phosphoethanolamine + H2O = 1-hexadecanoyl-sn-glycero-3-phosphoethanolamine + (9Z,12Z)-octadecadienoate + H(+). The enzyme catalyses 1-hexadecanoyl-2-(9Z,12Z-octadecadienoyl)-sn-glycero-3-phosphoethanolamine + H2O = 2-(9Z,12Z)-octadecadienoyl-sn-glycero-3-phosphoethanolamine + hexadecanoate + H(+). It catalyses the reaction 1-hexadecanoyl-2-(5Z,8Z,11Z,14Z-eicosatetraenoyl)-sn-glycero-3-phosphoethanolamine + H2O = 1-hexadecanoyl-sn-glycero-3-phosphoethanolamine + (5Z,8Z,11Z,14Z)-eicosatetraenoate + H(+). It carries out the reaction 1-hexadecanoyl-2-(5Z,8Z,11Z,14Z-eicosatetraenoyl)-sn-glycero-3-phosphoethanolamine + H2O = 2-(5Z,8Z,11Z,14Z)-eicosatetraenoyl-sn-glycero-3-phosphoethanolamine + hexadecanoate + H(+). The catalysed reaction is 1-hexanoyl-2-acyl-sn-glycero-3-phosphocholine + H2O = hexanoate + a 2-acyl-sn-glycero-3-phosphocholine + H(+). The enzyme catalyses 1-hexanoyl-2-acyl-sn-glycero-3-phosphocholine + H2O = 1-hexanoyl-sn-glycero-3-phosphocholine + a fatty acid + H(+). It catalyses the reaction 1,2-diheptadecanoyl-sn-glycero-3-phosphoethanolamine + 1-(9Z-octadecenoyl)-2-hexadecanoyl-sn-glycero-3-phosphocholine = 1,2-diheptadecanoyl-sn-glycero-3-phospho-N-hexadecanoyl-ethanolamine + 1-(9Z-octadecenoyl)-sn-glycero-3-phosphocholine + H(+). It carries out the reaction 1,2-diheptadecanoyl-sn-glycero-3-phosphoethanolamine + 1-(9Z-octadecenoyl)-2-hexadecanoyl-sn-glycero-3-phosphocholine = 1,2-diheptadecanoyl-sn-glycero-3-phospho-N-(9Z-octadecenoyl)-ethanolamine + 2-hexadecanoyl-sn-glycero-3-phosphocholine + H(+). The catalysed reaction is 1,2-dihexanoyl-sn-glycero-3-phosphoethanolamine + 2-heptanoyl-sn-glycero-3-phosphocholine = hexanoyl-sn-glycero-3-phosphoethanolamine + 1-hexanoyl-2-heptanoyl-sn-glycero-3-phosphocholine. The enzyme catalyses 1-hexadecanoyl-2-octadecanoyl-sn-glycero-3-phosphocholine + H2O = octadecanoate + 1-hexadecanoyl-sn-glycero-3-phosphocholine + H(+). It catalyses the reaction 1-hexadecanoyl-2-octadecanoyl-sn-glycero-3-phosphocholine + H2O = 2-octadecanoyl-sn-glycero-3-phosphocholine + hexadecanoate + H(+). It carries out the reaction 1-octadecanoyl-2-hexadecanoyl-sn-glycero-3-phosphocholine + H2O = 1-octadecanoyl-sn-glycero-3-phosphocholine + hexadecanoate + H(+). The catalysed reaction is 1-octadecanoyl-2-hexadecanoyl-sn-glycero-3-phosphocholine + H2O = 2-hexadecanoyl-sn-glycero-3-phosphocholine + octadecanoate + H(+). The enzyme catalyses 1-hexadecanoyl-2-(9Z,12Z-octadecadienoyl)-sn-glycero-3-phosphocholine + H2O = (9Z,12Z)-octadecadienoate + 1-hexadecanoyl-sn-glycero-3-phosphocholine + H(+). It catalyses the reaction 1-hexadecanoyl-2-(9Z,12Z-octadecadienoyl)-sn-glycero-3-phosphocholine + H2O = 2-(9Z,12Z-octadecadienoyl)-sn-glycero-3-phosphocholine + hexadecanoate + H(+). It carries out the reaction 1,2-di-(9Z-octadecenoyl)-sn-glycero-3-phosphocholine + H2O = 2-(9Z-octadecenoyl)-sn-glycero-3-phosphocholine + (9Z)-octadecenoate + H(+). The catalysed reaction is 1,2-dihexadecanoyl-sn-glycero-3-phosphocholine + H2O = hexadecanoyl-sn-glycero-3-phosphocholine + hexadecanoate + H(+). The enzyme catalyses 1,2-di-(9Z-octadecenoyl)-sn-glycero-3-phosphocholine + H2O = 1-(9Z-octadecenoyl)-sn-glycero-3-phosphocholine + (9Z)-octadecenoate + H(+). It catalyses the reaction 1,2-di-(9Z-octadecenoyl)-sn-glycero-3-phosphoethanolamine + 1,2-dihexadecanoyl-sn-glycero-3-phosphocholine = hexadecanoyl-sn-glycero-3-phosphocholine + N-hexadecanoyl-1,2-di-(9Z-octadecenoyl)-sn-glycero-3-phosphoethanolamine + H(+). It carries out the reaction 1,2-di-(9Z,12Z-octadecadienoyl)-sn-glycero-3-phosphocholine + H2O = 1-(9Z,12Z)-octadecadienoyl-sn-glycero-3-phosphocholine + (9Z,12Z)-octadecadienoate + H(+). Functionally, exhibits both phospholipase A1/2 and acyltransferase activities. Shows phospholipase A1 (PLA1) and A2 (PLA2), catalyzing the calcium-independent release of fatty acids from the sn-1 or sn-2 position of glycerophospholipids. For most substrates, PLA1 activity is much higher than PLA2 activity. Shows O-acyltransferase activity, catalyzing the transfer of a fatty acyl group from glycerophospholipid to the hydroxyl group of lysophospholipid. Shows N-acyltransferase activity, catalyzing the calcium-independent transfer of a fatty acyl group at the sn-1 position of phosphatidylcholine (PC) and other glycerophospholipids to the primary amine of phosphatidylethanolamine (PE), forming N-acylphosphatidylethanolamine (NAPE), which serves as precursor for N-acylethanolamines (NAEs). Exhibits high N-acyltransferase activity and low phospholipase A1/2 activity. Required for complete organelle rupture and degradation that occur during eye lens terminal differentiation, when fiber cells that compose the lens degrade all membrane-bound organelles in order to provide lens with transparency to allow the passage of light. Organelle membrane degradation is probably catalyzed by the phospholipase activity. Plays a role in phospholipid metabolism and adipogenesis. The sequence is that of Phospholipase A and acyltransferase 3 from Pongo abelii (Sumatran orangutan).